The following is a 93-amino-acid chain: Stromal cell-derived factor 1 (93 aa).

The first 21 residues, 1 to 21 (MDAKVVAVLALVLAALCISDG), serve as a signal peptide directing secretion. The short motif at 22 to 23 (KP) is the Receptor activation motif element. The tract at residues 29–33 (RCPCR) is receptor and heparin binding. Intrachain disulfides connect Cys30/Cys55 and Cys32/Cys71. Receptor binding stretches follow at residues 39–41 (IAR), 48–50 (KIL), and 60–70 (VARLKNNNRQV). Residues 41–51 (RANVKHLKILN), Arg62, Gln69, and Lys85 each bind heparin.

It belongs to the intercrine alpha (chemokine CxC) family. In terms of assembly, monomer or homodimer; in equilibrium. Dimer formation is induced by non acidic pH and the presence of multivalent anions, and by binding to CXCR4 or heparin. Monomeric form is required for full chemotactic activity and resistance to ischemia/reperfusion injury, whereas the dimeric form acts as a partial agonist of CXCR4, stimulating Ca2+ mobilization but with no chemotactic activity and instead acts as a selective antagonist that blocks chemotaxis induced by the monomeric form. Interacts with the N-terminus of ACKR3. Interacts with integrin subunit ITGB3 (via the allosteric site (site 2)). Interacts with TNFAIP6 (via Link domain). In terms of tissue distribution, highest expression levels detected in kidney, liver, spleen and muscle. Isoform Alpha is expressed ubiquitously but at varying levels, while isoform Beta displays tissue-specific expression, with expression detected in kidney, liver, heart, spleen and muscle but not in lung, colon, brain, skin and stomach.

The protein resides in the secreted. Functionally, chemoattractant active on T-lymphocytes and monocytes but not neutrophils. Activates the C-X-C chemokine receptor CXCR4 to induce a rapid and transient rise in the level of intracellular calcium ions and chemotaxis. Also binds to atypical chemokine receptor ACKR3, which activates the beta-arrestin pathway and acts as a scavenger receptor for SDF-1. Binds to the allosteric site (site 2) of integrins and activates integrins ITGAV:ITGB3, ITGA4:ITGB1 and ITGA5:ITGB1 in a CXCR4-independent manner. Acts as a positive regulator of monocyte migration and a negative regulator of monocyte adhesion via the LYN kinase. Stimulates migration of monocytes and T-lymphocytes through its receptors, CXCR4 and ACKR3, and decreases monocyte adherence to surfaces coated with ICAM-1, a ligand for beta-2 integrins. SDF1A/CXCR4 signaling axis inhibits beta-2 integrin LFA-1 mediated adhesion of monocytes to ICAM-1 through LYN kinase. Plays a protective role after myocardial infarction. Induces down-regulation and internalization of ACKR3 expressed in various cells. Has several critical functions during embryonic development; required for B-cell lymphopoiesis, myelopoiesis in bone marrow and heart ventricular septum formation. Stimulates the proliferation of bone marrow-derived B-cell progenitors in the presence of IL7 as well as growth of stromal cell-dependent pre-B-cells. This chain is Stromal cell-derived factor 1 (Cxcl12), found in Mus musculus (Mouse).